The primary structure comprises 323 residues: Transcriptional regulator protein Pur-beta-A (323 aa).

Disordered stretches follow at residues 1-34, 100-122, and 286-323; these read MADGDSGSERGGSSGGPGGFSQHMSREQETQELA, SPEQIAQASGEDGAGGPGGPRRA, and QERQRDKMYERRGPGDRERSLGPGGGGDDSETEDVDDD. Alanine 2 carries the N-acetylalanine modification. The span at 9–19 shows a compositional bias: gly residues; the sequence is ERGGSSGGPGG. Over residues 24-34 the composition is skewed to basic and acidic residues; that stretch reads MSREQETQELA. The interval 27–257 is DNA-binding; that stretch reads EQETQELATK…LRVSEVKPSY (231 aa). A compositionally biased stretch (basic and acidic residues) spans 286–305; it reads QERQRDKMYERRGPGDRERS. Residues 313–323 are compositionally biased toward acidic residues; that stretch reads DDSETEDVDDD.

This sequence belongs to the PUR DNA-binding protein family.

The protein localises to the nucleus. Transcriptional regulator which can act as an activator or a repressor. The chain is Transcriptional regulator protein Pur-beta-A (purb-a) from Xenopus laevis (African clawed frog).